We begin with the raw amino-acid sequence, 235 residues long: Serine/arginine-rich splicing factor 7 (235 aa).

The RRM domain occupies 11–84 (TKVYVGNLGT…SRVRVELSTG (74 aa)). Lysine 24 is modified (N6-acetyllysine; alternate). Lysine 24 is covalently cross-linked (Glycyl lysine isopeptide (Lys-Gly) (interchain with G-Cter in SUMO2); alternate). Serine 32 is modified (phosphoserine). Positions 81–98 (LSTGMPRRSRFDRPPARR) are sufficient for interaction with NXF1. A CCHC-type zinc finger spans residues 104 to 120 (DRCYECGEKGHYAYDCH). Basic residues predominate over residues 123-180 (SRRRRSRSRSRSHSRSRGRRYSRSRSRSRGRRSRSASPRRSRSVSLRRSRSASLRRSR). The interval 123 to 235 (SRRRRSRSRS…RRSASPERVD (113 aa)) is disordered. 4 consecutive repeat copies span residues 153–160 (RRSRSASP), 161–168 (RRSRSVSL), 169–176 (RRSRSASL), and 177–184 (RRSRSGSI). The interval 153–223 (RRSRSASPRR…SPKRSRSPSG (71 aa)) is 6 X 8 AA repeats of R-R-S-R-S-X-S-X. A phosphoserine mark is found at serine 163, serine 165, and serine 167. Serine 181, serine 183, serine 189, serine 191, and serine 193 each carry phosphoserine. A compositionally biased stretch (basic residues) spans 187 to 219 (SRSRSRSRSRSRSLSRPRSSRSKSRSPSPKRSR). Residues 208-215 (SKSRSPSP) form a 5; approximate repeat. One copy of the 6; approximate repeat lies at 216–223 (KRSRSPSG). Residues serine 228 and serine 230 each carry the phosphoserine modification.

The protein belongs to the splicing factor SR family. In terms of assembly, found in large molecular weight complexes containing CCNL1 and the p110 isoforms of either CDC2L1 or CDC2L2. Interacts with CCNL2 and CPSF6. Interacts with NXF1. Interacts with YTHDC1. Extensively phosphorylated on serine residues in the RS domain.

Its subcellular location is the nucleus. It is found in the cytoplasm. In terms of biological role, required for pre-mRNA splicing. Represses the splicing of MAPT/Tau exon 10. May function as export adapter involved in mRNA nuclear export such as of histone H2A. Binds mRNA which is thought to be transferred to the NXF1-NXT1 heterodimer for export (TAP/NXF1 pathway); enhances NXF1-NXT1 RNA-binding activity. RNA-binding is semi-sequence specific. The protein is Serine/arginine-rich splicing factor 7 (SRSF7) of Bos taurus (Bovine).